Here is a 322-residue protein sequence, read N- to C-terminus: Transaldolase (322 aa).

The active-site Schiff-base intermediate with substrate is lysine 132.

It belongs to the transaldolase family. Type 1 subfamily. Homodimer.

The protein localises to the cytoplasm. It catalyses the reaction D-sedoheptulose 7-phosphate + D-glyceraldehyde 3-phosphate = D-erythrose 4-phosphate + beta-D-fructose 6-phosphate. Its pathway is carbohydrate degradation; pentose phosphate pathway; D-glyceraldehyde 3-phosphate and beta-D-fructose 6-phosphate from D-ribose 5-phosphate and D-xylulose 5-phosphate (non-oxidative stage): step 2/3. Its function is as follows. Transaldolase is important for the balance of metabolites in the pentose-phosphate pathway. The chain is Transaldolase from Protochlamydia amoebophila (strain UWE25).